We begin with the raw amino-acid sequence, 173 residues long: Terpene cyclase subB (173 aa).

4 helical membrane passes run 11 to 31 (PGYLEVAWIADTCKLLMGLGW), 51 to 71 (ALMPLCCNFAWELTYAVIYPF), 112 to 132 (LPFIFIICIAAWTTAHLALAL), and 141 to 161 (AFSAYGCQLLLSVGALCQLLS).

The protein belongs to the paxB family.

The protein localises to the membrane. The protein operates within secondary metabolite biosynthesis; terpenoid biosynthesis. Functionally, terpene cyclase; part of the gene cluster that mediates the biosynthesis of the immunosuppressants subglutinols, meroterpenoids consisting of an alpha-pyrone (4-hydroxy-5,6-dimethyl-2-pyrone) moiety attached to a decalin core fused to a five-membered cyclic ether carrying a prenylside chain. The first step of the pathway is the synthesis of the alpha-pyrone moiety by the polyketide synthase subA via condensation of one acetyl-CoA starter unit with 3 malonyl-CoA units and 2 methylations. The alpha-pyrone is then combined with geranylgeranyl pyrophosphate (GGPP) formed by the GGPP synthase subD through the action of the prenyltransferase subC to yield a linear alpha-pyrone diterpenoid. Subsequent steps in the subglutinol biosynthetic pathway involve the decalin core formation, which is thought to be initiated by the epoxidation of the C10-C11 olefin by the FAD-dependent oxidoreductase subE. The following cyclization cascade would be catalyzed by the terpene cyclase subB. Lastly, the FAD-dependent dehydrogenase subF probably catalyzes the five-membered cyclic ether formation to complete the formation of subglutinol A. Subsequent redox reactions appear to give rise to subglutinol C and D, however, it remains unclear which enzymes are responsible for these transformations. SubD may have secondary function in the conversion of the identified subglutinols to subglutinol analog 45, which seems to be the major product of the cluster. In Metarhizium robertsii (strain ARSEF 23 / ATCC MYA-3075) (Metarhizium anisopliae (strain ARSEF 23)), this protein is Terpene cyclase subB.